Here is a 175-residue protein sequence, read N- to C-terminus: Large ribosomal subunit protein uL10 (175 aa).

It belongs to the universal ribosomal protein uL10 family. In terms of assembly, part of the ribosomal stalk of the 50S ribosomal subunit. The N-terminus interacts with L11 and the large rRNA to form the base of the stalk. The C-terminus forms an elongated spine to which L12 dimers bind in a sequential fashion forming a multimeric L10(L12)X complex.

Functionally, forms part of the ribosomal stalk, playing a central role in the interaction of the ribosome with GTP-bound translation factors. The protein is Large ribosomal subunit protein uL10 of Alkalilimnicola ehrlichii (strain ATCC BAA-1101 / DSM 17681 / MLHE-1).